The chain runs to 244 residues: MALMLVLFFLAAVLPPSLLQDSSQENRLEKLSTTKMSVQEEIVSKHNQLRRMVSPSGSDLLKMEWNYDAQVNAQQWADKCTFSHSPIELRTTNLRCGENLFMSSYLASWSSAIQGWYNEYKDLTYDVGPKQPDSVVGHYTQVVWNSTFQVACGVAECPKNPLRYYYVCHYCPVGNYQGRLYTPYTAGEPCASCPDHCEDGLCTNSCGHEDKYTNCKYLKKMLSCEHELLKKGCKATCLCEGKIH.

An N-terminal signal peptide occupies residues 1-19 (MALMLVLFFLAAVLPPSLL). Residues 44–170 (SKHNQLRRMV…PLRYYYVCHY (127 aa)) enclose the SCP domain. A glycan (N-linked (GlcNAc...) asparagine) is linked at asparagine 145. 5 disulfides stabilise this stretch: cysteine 190–cysteine 197, cysteine 193–cysteine 202, cysteine 206–cysteine 239, cysteine 215–cysteine 233, and cysteine 224–cysteine 237. The region spanning 206–239 (CGHEDKYTNCKYLKKMLSCEHELLKKGCKATCLC) is the ShKT domain.

It belongs to the CRISP family. In terms of tissue distribution, mainly found in the cauda epididymis where it is synthesized by the principal cells and secreted into the lumen. Binds to the heads of spermatozoa. Also expressed in the submandibular gland.

The protein localises to the cytoplasmic vesicle. It localises to the secretory vesicle. This protein is supposed to help spermatozoa undergo functional maturation while they move from the testis to the ductus deferens. The chain is Cysteine-rich secretory protein 1 (Crisp1) from Mus musculus (Mouse).